Reading from the N-terminus, the 253-residue chain is Phosphate import ATP-binding protein PstB 1 (253 aa).

Residues 7-248 (LQIRDLSVYY…PKRKETEDYI (242 aa)) enclose the ABC transporter domain. 39-46 (GPSGSGKS) is an ATP binding site.

This sequence belongs to the ABC transporter superfamily. Phosphate importer (TC 3.A.1.7) family. In terms of assembly, the complex is composed of two ATP-binding proteins (PstB), two transmembrane proteins (PstC and PstA) and a solute-binding protein (PstS).

The protein resides in the cell membrane. It catalyses the reaction phosphate(out) + ATP + H2O = ADP + 2 phosphate(in) + H(+). Part of the ABC transporter complex PstSACB involved in phosphate import. Responsible for energy coupling to the transport system. This is Phosphate import ATP-binding protein PstB 1 from Streptococcus pyogenes serotype M2 (strain MGAS10270).